Reading from the N-terminus, the 321-residue chain is Low affinity immunoglobulin epsilon Fc receptor (321 aa).

Over 1 to 21 (MEEGQYSEIEELPRRRCCRRG) the chain is Cytoplasmic. Residues C17 and C18 are each lipidated (S-palmitoyl cysteine). The helical; Signal-anchor for type II membrane protein transmembrane segment at 22 to 47 (TQIVLLGLVTAALWAGLLTLLLLWHW) threads the bilayer. Residues 48-321 (DTTQSLKQLE…LPTPSAPLHS (274 aa)) lie on the Extracellular side of the membrane. N63 is a glycosylation site (N-linked (GlcNAc...) asparagine). The segment at 66 to 85 (QVSKNLESHHGDQMAQKSQS) is disordered. 3 repeats span residues 69–89 (KNLESHHGDQMAQKSQSTQIS), 90–110 (QELEELRAEQQRLKSQDLELS), and 111–131 (WNLNGLQADLSSFKSQELNER). Cystine bridges form between C160-C288, C163-C174, C191-C282, and C259-C273. The 123-residue stretch at 162-284 (TCPEKWINFQ…RKLGAWVCDR (123 aa)) folds into the C-type lectin domain. E249, T251, N269, and D270 together coordinate Ca(2+). The disordered stretch occupies residues 290-321 (PPASEGSAESMGPDSRPDPDGRLPTPSAPLHS). O-linked (Xyl...) (chondroitin sulfate) serine glycosylation occurs at S296.

As to quaternary structure, homotrimer. Interacts (via C-type lectin domain) with IGHE (via CH3 region); this interaction regulates IgE homeostasis. Interacts (via the C-terminus) with CR2/CD21 (via Sushi domain 1 and 2). In terms of processing, N- and O-glycosylated. The secreted form sCD23 is produced by ADAM10-mediated ectodomain shedding. In terms of tissue distribution, detected in urine (at protein level).

The protein localises to the cell membrane. The protein resides in the secreted. Functionally, low-affinity receptor for immunoglobulin E (IgE) and CR2/CD21. Has essential roles in the regulation of IgE production and in the differentiation of B cells. On B cells, initiates IgE-dependent antigen uptake and presentation to T cells. On macrophages, upon IgE binding and antigen cross-linking induces intracellular killing of parasites through activation of L-Arginine-nitric oxide pathway. The polypeptide is Low affinity immunoglobulin epsilon Fc receptor (FCER2) (Homo sapiens (Human)).